We begin with the raw amino-acid sequence, 248 residues long: 1-(5-phosphoribosyl)-5-[(5-phosphoribosylamino)methylideneamino] imidazole-4-carboxamide isomerase (248 aa).

The Proton acceptor role is filled by Asp-7. The active-site Proton donor is the Asp-131.

This sequence belongs to the HisA/HisF family.

The protein resides in the cytoplasm. It carries out the reaction 1-(5-phospho-beta-D-ribosyl)-5-[(5-phospho-beta-D-ribosylamino)methylideneamino]imidazole-4-carboxamide = 5-[(5-phospho-1-deoxy-D-ribulos-1-ylimino)methylamino]-1-(5-phospho-beta-D-ribosyl)imidazole-4-carboxamide. Its pathway is amino-acid biosynthesis; L-histidine biosynthesis; L-histidine from 5-phospho-alpha-D-ribose 1-diphosphate: step 4/9. The polypeptide is 1-(5-phosphoribosyl)-5-[(5-phosphoribosylamino)methylideneamino] imidazole-4-carboxamide isomerase (Baumannia cicadellinicola subsp. Homalodisca coagulata).